Here is a 677-residue protein sequence, read N- to C-terminus: Methionine--tRNA ligase (677 aa).

The 'HIGH' region motif lies at 15 to 25 (PYANGSIHLGH). Positions 146, 149, 159, and 162 each coordinate Zn(2+). The 'KMSKS' region motif lies at 333-337 (KMSKS). ATP is bound at residue lysine 336. Positions 575–677 (DFAKIDLRVA…DGAKPGQQVK (103 aa)) constitute a tRNA-binding domain.

This sequence belongs to the class-I aminoacyl-tRNA synthetase family. MetG type 1 subfamily. Homodimer. Requires Zn(2+) as cofactor.

It localises to the cytoplasm. The catalysed reaction is tRNA(Met) + L-methionine + ATP = L-methionyl-tRNA(Met) + AMP + diphosphate. Its function is as follows. Is required not only for elongation of protein synthesis but also for the initiation of all mRNA translation through initiator tRNA(fMet) aminoacylation. In Salmonella typhimurium (strain LT2 / SGSC1412 / ATCC 700720), this protein is Methionine--tRNA ligase.